We begin with the raw amino-acid sequence, 629 residues long: 1-deoxy-D-xylulose-5-phosphate synthase (629 aa).

Residues H72 and 113–115 (GHS) contribute to the thiamine diphosphate site. Position 144 (D144) interacts with Mg(2+). Residues 145-146 (GA), N173, Y284, and E366 each bind thiamine diphosphate. N173 is a Mg(2+) binding site.

This sequence belongs to the transketolase family. DXPS subfamily. Homodimer. It depends on Mg(2+) as a cofactor. The cofactor is thiamine diphosphate.

The enzyme catalyses D-glyceraldehyde 3-phosphate + pyruvate + H(+) = 1-deoxy-D-xylulose 5-phosphate + CO2. It functions in the pathway metabolic intermediate biosynthesis; 1-deoxy-D-xylulose 5-phosphate biosynthesis; 1-deoxy-D-xylulose 5-phosphate from D-glyceraldehyde 3-phosphate and pyruvate: step 1/1. Catalyzes the acyloin condensation reaction between C atoms 2 and 3 of pyruvate and glyceraldehyde 3-phosphate to yield 1-deoxy-D-xylulose-5-phosphate (DXP). The protein is 1-deoxy-D-xylulose-5-phosphate synthase of Halalkalibacterium halodurans (strain ATCC BAA-125 / DSM 18197 / FERM 7344 / JCM 9153 / C-125) (Bacillus halodurans).